The chain runs to 196 residues: Probable malonic semialdehyde reductase RutE (196 aa).

The protein belongs to the nitroreductase family. HadB/RutE subfamily. FMN is required as a cofactor.

It catalyses the reaction 3-hydroxypropanoate + NADP(+) = 3-oxopropanoate + NADPH + H(+). Functionally, may reduce toxic product malonic semialdehyde to 3-hydroxypropionic acid, which is excreted. The polypeptide is Probable malonic semialdehyde reductase RutE (Shigella flexneri serotype 5b (strain 8401)).